Consider the following 362-residue polypeptide: Probable aromatic amino acid hydroxylase (362 aa).

Fe cation-binding residues include His200 and His205.

The protein belongs to the biopterin-dependent aromatic amino acid hydroxylase family. Fe(2+) is required as a cofactor.

In Chlamydia pneumoniae (Chlamydophila pneumoniae), this protein is Probable aromatic amino acid hydroxylase.